The chain runs to 570 residues: Chaperonin GroEL 1 (570 aa).

ATP-binding positions include 42–45, lysine 63, 99–103, glycine 427, and aspartate 507; these read TLGP and DGTTT. The disordered stretch occupies residues 537-570; it reads EDEDDDDGGGGGGGGMPAGGAGGMGGMGGMGGMM. Residues 545–570 show a composition bias toward gly residues; it reads GGGGGGGMPAGGAGGMGGMGGMGGMM.

Belongs to the chaperonin (HSP60) family. Forms a cylinder of 14 subunits composed of two heptameric rings stacked back-to-back. Interacts with the co-chaperonin GroES.

It is found in the cytoplasm. The catalysed reaction is ATP + H2O + a folded polypeptide = ADP + phosphate + an unfolded polypeptide.. In terms of biological role, together with its co-chaperonin GroES, plays an essential role in assisting protein folding. The GroEL-GroES system forms a nano-cage that allows encapsulation of the non-native substrate proteins and provides a physical environment optimized to promote and accelerate protein folding. This Salinibacter ruber (strain DSM 13855 / M31) protein is Chaperonin GroEL 1.